A 257-amino-acid polypeptide reads, in one-letter code: 8-demethyl-8-aminoriboflavin-5'-phosphate synthase (257 aa).

Residues 11–13 (TLR), 19–21 (SQT), 91–94 (ITLN), 132–136 (CGNED), and Tyr240 contribute to the FMN site.

The protein belongs to the SsuE family. Homotetramer.

It catalyses the reaction FMN + L-glutamate + 3 A + O2 + H2O = 8-amino-8-demethylriboflavin 5'-phosphate + 2-oxoglutarate + 3 AH2 + CO2 + H(+). It functions in the pathway antibiotic biosynthesis. Its function is as follows. Involved in the biosynthesis of the riboflavin analog antibiotic roseoflavin (3,8-dimethylamino-riboflavin). Catalyzes the site-specific substitution of the C-8 methyl group of riboflavin-5'-phosphate (FMN) by an amino group to yield 8-amino-8-demethylriboflavin 5'-phosphate, via a combined oxidation, decarboxylation and transamination reaction. The catalysis is initiated by an oxidation step in which the C-8 methyl group on the dimethylbenzene ring of FMN is converted to a formyl group to yield the 8-demethyl-8-formylriboflavin-5'-phosphate (OHC-RP) intermediate. In the presence of thiamine, the formyl group is oxidized into a carboxyl group to yield the 8-demethyl-8-carboxyriboflavin-5'-phosphate (HO2C-RP) intermediate. Finally, in the presence of L-glutamate as an amino donor, decarboxylation and aminotransfer occur, resulting in production of 8-demethyl-8-aminoriboflavin-5'-phosphate. Addition of NAD (but not NADP) to the reaction increases the yield 1.7-fold. The reaction also proceeds without the addition of any electron acceptor, and it is possible that molecular oxygen serves this role. The chain is 8-demethyl-8-aminoriboflavin-5'-phosphate synthase from Streptomyces davaonensis (strain DSM 101723 / JCM 4913 / KCC S-0913 / 768).